The chain runs to 640 residues: Large subunit GTPase 1 homolog (640 aa).

The region spanning 165 to 426 (WRQLWRVIER…LCDCPGLVMP (262 aa)) is the CP-type G domain. 213 to 216 (NKAD) serves as a coordination point for GTP. The segment at 251–341 (AEERGEDAMD…ESTATSSFYN (91 aa)) is disordered. Composition is skewed to acidic residues over residues 253–270 (ERGE…TEEE), 290–304 (EKDE…EGED), and 320–331 (ESGDEDHAEENP). A compositionally biased stretch (polar residues) spans 332–341 (ESTATSSFYN). Residues 375–382 (GYPNVGKS) and 419–422 (DCPG) each bind GTP. The tract at residues 602-640 (GPVEAGKANTEQQAGKPWKKHGNRNKKEKVRRLNKHLDA) is disordered. Over residues 618-640 (PWKKHGNRNKKEKVRRLNKHLDA) the composition is skewed to basic residues.

Belongs to the TRAFAC class YlqF/YawG GTPase family. LSG1 subfamily.

Its subcellular location is the cytoplasm. The protein localises to the endoplasmic reticulum. The protein resides in the nucleus. It is found in the cajal body. The catalysed reaction is GTP + H2O = GDP + phosphate + H(+). Functions as a GTPase. May act by mediating the release of NMD3 from the 60S ribosomal subunit after export into the cytoplasm during the 60S ribosomal subunit maturation. In Danio rerio (Zebrafish), this protein is Large subunit GTPase 1 homolog.